The primary structure comprises 422 residues: Replication factor C large subunit (422 aa).

63 to 70 is an ATP binding site; it reads GPPGIGKT.

Belongs to the activator 1 small subunits family. RfcL subfamily. Heteromultimer composed of small subunits (RfcS) and large subunits (RfcL).

In terms of biological role, part of the RFC clamp loader complex which loads the PCNA sliding clamp onto DNA. This chain is Replication factor C large subunit, found in Pyrobaculum neutrophilum (strain DSM 2338 / JCM 9278 / NBRC 100436 / V24Sta) (Thermoproteus neutrophilus).